Reading from the N-terminus, the 338-residue chain is MAVKVGINGFGRIGRIVLRNAIIHGDIDVVAINDPFIDLEYMVYMFKYDSTHGVFKGSVEIKDGKLVIEGKPIVVYGERDPANIQWGAAGADYVVESTGVFTTQEKAELHLKGGAKKVVISAPSADAPMFVCGVNLDKYDPKYTVVSNASCTTNCLAPLGKVIHDNYTIVEGLMTTVHATTATQKTVDGPSNKDWRGGRGAGANIIPSSTGAAKAVGKVIPSLNGKLTGMAFRVPTPDVSVVDLVVRIEKGASYEEIKETIKKASQTPELKGILNYTDDQVVSTDFTGDSASSTFDAQGGISLNGNFVKLVSWYDNEWGYSARVCDLVSYIAAQDAKA.

NAD(+) contacts are provided by residues arginine 12–isoleucine 13, aspartate 34, and arginine 79. D-glyceraldehyde 3-phosphate-binding positions include serine 150–threonine 152, threonine 181, threonine 210–glycine 211, and arginine 233. The active-site Nucleophile is cysteine 151. Position 316 (asparagine 316) interacts with NAD(+).

Belongs to the glyceraldehyde-3-phosphate dehydrogenase family. As to quaternary structure, homotetramer.

It localises to the cytoplasm. The catalysed reaction is D-glyceraldehyde 3-phosphate + phosphate + NAD(+) = (2R)-3-phospho-glyceroyl phosphate + NADH + H(+). It functions in the pathway carbohydrate degradation; glycolysis; pyruvate from D-glyceraldehyde 3-phosphate: step 1/5. This chain is Glyceraldehyde-3-phosphate dehydrogenase (GPD), found in Phaffia rhodozyma (Yeast).